Consider the following 376-residue polypeptide: Alanine racemase (376 aa).

The Proton acceptor; specific for D-alanine role is filled by Lys40. An N6-(pyridoxal phosphate)lysine modification is found at Lys40. Arg138 is a binding site for substrate. The active-site Proton acceptor; specific for L-alanine is Tyr270. Met317 lines the substrate pocket.

The protein belongs to the alanine racemase family. It depends on pyridoxal 5'-phosphate as a cofactor.

The catalysed reaction is L-alanine = D-alanine. The protein operates within amino-acid biosynthesis; D-alanine biosynthesis; D-alanine from L-alanine: step 1/1. Catalyzes the interconversion of L-alanine and D-alanine. May also act on other amino acids. The chain is Alanine racemase (alr) from Lactobacillus delbrueckii subsp. bulgaricus (strain ATCC BAA-365 / Lb-18).